A 152-amino-acid chain; its full sequence is DNA-binding transcriptional activator DecR (152 aa).

The HTH asnC-type domain occupies 2–63 (LDKIDRKLLA…LLDPEKIGLG (62 aa)). Residues 21 to 40 (LQALAEAVNLTTTPCWKRLK) constitute a DNA-binding region (H-T-H motif).

In terms of biological role, plays a role in L-cysteine detoxification. Binds to the dlsT(yhaO)-yhaM operon promoter in the presence but not absence of L-cysteine; activates transcription from the dlsT(yhaO)-yhaM operon. The protein is DNA-binding transcriptional activator DecR (decR) of Escherichia coli O157:H7.